Reading from the N-terminus, the 346-residue chain is Protein RecA (346 aa).

67 to 74 (GPESSGKT) is a binding site for ATP.

Belongs to the RecA family.

The protein localises to the cytoplasm. Functionally, can catalyze the hydrolysis of ATP in the presence of single-stranded DNA, the ATP-dependent uptake of single-stranded DNA by duplex DNA, and the ATP-dependent hybridization of homologous single-stranded DNAs. It interacts with LexA causing its activation and leading to its autocatalytic cleavage. The protein is Protein RecA of Mycobacterium marinum (strain ATCC BAA-535 / M).